A 273-amino-acid polypeptide reads, in one-letter code: NADPH-dependent 7-cyano-7-deazaguanine reductase (273 aa).

Residue 80 to 82 (VES) participates in substrate binding. Residue 82–83 (SK) participates in NADPH binding. C180 (thioimide intermediate) is an active-site residue. D187 (proton donor) is an active-site residue. 219-220 (HE) contacts substrate. 248 to 249 (RG) provides a ligand contact to NADPH.

The protein belongs to the GTP cyclohydrolase I family. QueF type 2 subfamily. Homodimer.

It is found in the cytoplasm. The catalysed reaction is 7-aminomethyl-7-carbaguanine + 2 NADP(+) = 7-cyano-7-deazaguanine + 2 NADPH + 3 H(+). The protein operates within tRNA modification; tRNA-queuosine biosynthesis. In terms of biological role, catalyzes the NADPH-dependent reduction of 7-cyano-7-deazaguanine (preQ0) to 7-aminomethyl-7-deazaguanine (preQ1). This is NADPH-dependent 7-cyano-7-deazaguanine reductase from Bordetella pertussis (strain Tohama I / ATCC BAA-589 / NCTC 13251).